The chain runs to 1261 residues: ABC-type transmembrane transporter verA (1261 aa).

The helical transmembrane segment at 41-61 (IGCAFAAVCSGAAMPLMALIL) threads the bilayer. Residues 41–334 (IGCAFAAVCS…LGPNMPSFIK (294 aa)) form the ABC transmembrane type-1 1 domain. N-linked (GlcNAc...) asparagine glycosylation is present at Asn-67. A run of 5 helical transmembrane segments spans residues 92–112 (LWFV…SFGF), 166–186 (LGIM…AFSQ), 190–210 (LTLV…FIVS), 270–290 (FVGL…AIGF), and 308–328 (ILSV…LGPN). The region spanning 374 to 618 (VELRDMSFAY…GGLYKRLYDA (245 aa)) is the ABC transporter 1 domain. A glycan (N-linked (GlcNAc...) asparagine) is linked at Asn-396. 409–416 (GPSGAGKS) provides a ligand contact to ATP. N-linked (GlcNAc...) asparagine glycosylation is present at Asn-463. The next 6 helical transmembrane spans lie at 686–706 (YWPI…IFPV), 734–754 (LMFF…GFFM), 808–828 (MGLL…GLAY), 830–850 (WKFA…AGYL), 913–933 (VMTL…ALGF), and 950–970 (FFTV…LFGF). The ABC transmembrane type-1 2 domain maps to 691-976 (LIGLVACVVT…LFGFSSNLGK (286 aa)). 2 N-linked (GlcNAc...) asparagine glycosylation sites follow: Asn-1007 and Asn-1021. The 239-residue stretch at 1017–1255 (VDMQNVTFAY…QGNYFKMHES (239 aa)) folds into the ABC transporter 2 domain. 1052-1059 (GTSGSGKS) contributes to the ATP binding site. Asn-1106 carries N-linked (GlcNAc...) asparagine glycosylation.

It belongs to the ABC transporter superfamily. ABCB family. Multidrug resistance exporter (TC 3.A.1.201) subfamily.

Its subcellular location is the cell membrane. In terms of biological role, ABC-type transmembrane transporter; part of the gene cluster that mediates the biosynthesis of 11'-deoxyverticillin A, one of the dimeric epipolythiodioxopiperazines (ETPs) from the verticillin family that are toxic secondary metabolites. The verA multidrug transporter is probably involved in the secretion of 11'-deoxyverticillin A. The sequence is that of ABC-type transmembrane transporter verA from Clonostachys rogersoniana.